The primary structure comprises 180 residues: Transcription repressor NadR (180 aa).

In terms of assembly, homodimer.

Its function is as follows. In the presence of nicotinic acid represses transcription of the nadBCA and nifS-nadR operons. Also binds to DNA upstream of the niaP gene, probably regulating it as well. May bind nicotinic acid. In Bacillus subtilis (strain 168), this protein is Transcription repressor NadR (nadR).